We begin with the raw amino-acid sequence, 185 residues long: Large ribosomal subunit protein uL5 (185 aa).

This sequence belongs to the universal ribosomal protein uL5 family. In terms of assembly, part of the 50S ribosomal subunit; part of the 5S rRNA/L5/L18/L25 subcomplex. Contacts the 5S rRNA and the P site tRNA. Forms a bridge to the 30S subunit in the 70S ribosome.

In terms of biological role, this is one of the proteins that bind and probably mediate the attachment of the 5S RNA into the large ribosomal subunit, where it forms part of the central protuberance. In the 70S ribosome it contacts protein S13 of the 30S subunit (bridge B1b), connecting the 2 subunits; this bridge is implicated in subunit movement. Contacts the P site tRNA; the 5S rRNA and some of its associated proteins might help stabilize positioning of ribosome-bound tRNAs. The polypeptide is Large ribosomal subunit protein uL5 (Streptomyces avermitilis (strain ATCC 31267 / DSM 46492 / JCM 5070 / NBRC 14893 / NCIMB 12804 / NRRL 8165 / MA-4680)).